A 745-amino-acid chain; its full sequence is 5-methyltetrahydropteroyltriglutamate--homocysteine methyltransferase (745 aa).

5-methyltetrahydropteroyltri-L-glutamate-binding positions include 16–19 and K110; that span reads REWK. Residues 420 to 422 and E473 contribute to the L-homocysteine site; that span reads IGS. Residues 420-422 and E473 contribute to the L-methionine site; that span reads IGS. W550 is a binding site for 5-methyltetrahydropteroyltri-L-glutamate. Position 588 (D588) interacts with L-homocysteine. D588 is an L-methionine binding site. E594 serves as a coordination point for 5-methyltetrahydropteroyltri-L-glutamate. Residues H630, C632, and E654 each coordinate Zn(2+). H683 serves as the catalytic Proton donor. C715 is a binding site for Zn(2+).

This sequence belongs to the vitamin-B12 independent methionine synthase family. Zn(2+) serves as cofactor.

The enzyme catalyses 5-methyltetrahydropteroyltri-L-glutamate + L-homocysteine = tetrahydropteroyltri-L-glutamate + L-methionine. It functions in the pathway amino-acid biosynthesis; L-methionine biosynthesis via de novo pathway; L-methionine from L-homocysteine (MetE route): step 1/1. Functionally, catalyzes the transfer of a methyl group from 5-methyltetrahydrofolate to homocysteine resulting in methionine formation. The sequence is that of 5-methyltetrahydropteroyltriglutamate--homocysteine methyltransferase from Streptococcus agalactiae serotype III (strain NEM316).